We begin with the raw amino-acid sequence, 190 residues long: Potassium-transporting ATPase KdpC subunit (190 aa).

A helical membrane pass occupies residues 10–30; the sequence is TFLFLLLITGGVYPLLTTALG.

This sequence belongs to the KdpC family. The system is composed of three essential subunits: KdpA, KdpB and KdpC.

It localises to the cell inner membrane. Part of the high-affinity ATP-driven potassium transport (or Kdp) system, which catalyzes the hydrolysis of ATP coupled with the electrogenic transport of potassium into the cytoplasm. This subunit acts as a catalytic chaperone that increases the ATP-binding affinity of the ATP-hydrolyzing subunit KdpB by the formation of a transient KdpB/KdpC/ATP ternary complex. This is Potassium-transporting ATPase KdpC subunit from Escherichia fergusonii (strain ATCC 35469 / DSM 13698 / CCUG 18766 / IAM 14443 / JCM 21226 / LMG 7866 / NBRC 102419 / NCTC 12128 / CDC 0568-73).